A 353-amino-acid chain; its full sequence is GDSL esterase/lipase APG (353 aa).

Residues 1–25 (MDRCTSSFLLLTLVSTLSILQISFA) form the signal peptide. Ser37 functions as the Nucleophile in the catalytic mechanism. Residues Asn197 and Asn320 are each glycosylated (N-linked (GlcNAc...) asparagine). Residues Asp328 and His331 contribute to the active site.

It belongs to the 'GDSL' lipolytic enzyme family.

It is found in the secreted. The protein is GDSL esterase/lipase APG (APG) of Arabidopsis thaliana (Mouse-ear cress).